We begin with the raw amino-acid sequence, 490 residues long: Gallate decarboxylase (490 aa).

Mn(2+) is bound at residue aspartate 165. Prenylated FMN-binding positions include 168–170 (IHR) and glycine 187. Glutamate 233 serves as a coordination point for Mn(2+). Glutamate 289 acts as the Proton acceptor in catalysis.

Belongs to the UbiD family. Requires prenylated FMN as cofactor. The cofactor is Mn(2+).

The catalysed reaction is 3,4,5-trihydroxybenzoate + H(+) = 1,2,3-trihydroxybenzene + CO2. It catalyses the reaction 3,4-dihydroxybenzoate + H(+) = catechol + CO2. Its function is as follows. Involved in tannin degradation. Catalyzes the decarboxylation of gallic acid and protocatechuic acid to pyrogallol and catechol, respectively. This chain is Gallate decarboxylase, found in Lactiplantibacillus plantarum (strain ATCC BAA-793 / NCIMB 8826 / WCFS1) (Lactobacillus plantarum).